Here is a 326-residue protein sequence, read N- to C-terminus: Alkanal monooxygenase beta chain (326 aa).

This sequence belongs to the bacterial luciferase oxidoreductase family. As to quaternary structure, heterodimer of an alpha and a beta chain.

The catalysed reaction is a long-chain fatty aldehyde + FMNH2 + O2 = a long-chain fatty acid + hnu + FMN + H2O + 2 H(+). Its function is as follows. Light-emitting reaction in luminous bacteria. The specific role of the beta subunit is unknown, but it is absolutely required for bioluminescence activity. The polypeptide is Alkanal monooxygenase beta chain (luxB) (Photobacterium leiognathi).